The chain runs to 110 residues: MLSLDQIPHHIRHGIVGSRLIQIRGRVTQVTGTLLKAVVPGVRIGELCYLRNPDNSLSLQAEVIGFAQHQALLIPLGEMYGISSNTEVSPTGQCIRLGWVNICWGRCWMV.

This is an uncharacterized protein from Yersinia enterocolitica.